Reading from the N-terminus, the 855-residue chain is Inactive rhomboid protein 1 (855 aa).

The tract at residues methionine 1–serine 36 is disordered. Over methionine 1–threonine 411 the chain is Cytoplasmic. Residues proline 25 to serine 36 are compositionally biased toward low complexity. A phosphoserine mark is found at serine 76 and serine 176. Phosphothreonine occurs at positions 180 and 183. Position 390 is a phosphoserine (serine 390). Residues phenylalanine 412 to phenylalanine 432 traverse the membrane as a helical segment. At serine 433–arginine 655 the chain is on the lumenal side. Asparagine 583 carries N-linked (GlcNAc...) asparagine glycosylation. A helical transmembrane segment spans residues leucine 656 to glutamine 676. Topologically, residues methionine 677 to arginine 691 are cytoplasmic. Residues isoleucine 692–proline 712 form a helical membrane-spanning segment. Residues tyrosine 713–arginine 714 are Lumenal-facing. Residues alanine 715–phenylalanine 735 traverse the membrane as a helical segment. Topologically, residues glutamine 736–arginine 746 are cytoplasmic. The chain crosses the membrane as a helical span at residues alanine 747–isoleucine 767. The Lumenal portion of the chain corresponds to aspartate 768–histidine 772. Residues isoleucine 773–glycine 793 form a helical membrane-spanning segment. Residues lysine 794 to glutamine 803 lie on the Cytoplasmic side of the membrane. A helical membrane pass occupies residues isoleucine 804 to phenylalanine 824. The Lumenal portion of the chain corresponds to tyrosine 825 to histidine 855.

It belongs to the peptidase S54 family. Homodimer, or homooligomer. Interacts with TGFA and HBEGF. Interacts with EGF; may retain EGF in the endoplasmic reticulum and regulates its degradation through the endoplasmic reticulum-associated degradation (ERAD). Interacts (via cytoplasmic N-terminus) with FRMD8/iTAP; this interaction leads to mutual protein stabilization. Interacts with ADAM17/TACE.

It localises to the endoplasmic reticulum membrane. The protein resides in the golgi apparatus membrane. Its function is as follows. Regulates ADAM17 protease, a sheddase of the epidermal growth factor (EGF) receptor ligands and TNF, thereby plays a role in sleep, cell survival, proliferation, migration and inflammation. Does not exhibit any protease activity on its own. The polypeptide is Inactive rhomboid protein 1 (RHBDF1) (Plecturocebus moloch (Dusky titi monkey)).